We begin with the raw amino-acid sequence, 439 residues long: MATDALYNEVAEIIRCVLAKEKSVRNAVYGSSYKNKKALLRLSCESLKFRPVFDEILQDKELKSMKRDANIGGSVELLYVLMYETLVGSGLTRCSQELKSVISRRIQRIKEVEHAMQDEGRGIKAMKEADDGMKKIQIPRYARINTLKWTADEAMKTLETEKWKILGTLKPENFAEMVTKMKDDEVYVDPHVENLIIFAPNIQNFYEYWMVEQRYLILQDKASCLPAFLLNPRPGSQVFDTCAAPGMKTSHAAAIMENQGKVWAMDRAADRVATMKQLLDASKVAIASSFCGDFLKTDVTDKKFSKVKFAIVDPPCSGSGIVKRMDEITGGNAEKERLEKLKNLQAMILKHALKLPGLKRAVYSTCSVHEEENEQVVDEVLLDTYVRQNYVLKKNVLPEWTYRGLKTYEVGEHCLRANPKVTLTNGFFVAVFERVKSSE.

Positions 266, 293, and 313 each coordinate S-adenosyl-L-methionine. Catalysis depends on Cys-366, which acts as the Nucleophile.

Belongs to the class I-like SAM-binding methyltransferase superfamily. RsmB/NOP family.

The catalysed reaction is a cytidine in 26S rRNA + S-adenosyl-L-methionine = a 5-methylcytidine in 26S rRNA + S-adenosyl-L-homocysteine + H(+). S-adenosyl-L-methionine-dependent methyltransferase which methylates the carbon-5 position of cytosine 2381 to 5-methylcytosine (m5C2381) in 26S rRNA. Plays a role in the production of mature 5S, 5.8S, 18S and 26S rRNAs and promotes the processing of the internally transcribed spacer 2 (ITS2), which separates the 5.8S and 26S rRNAs on large pre-rRNA precursors. May play a role in the translation of leucine and proline codons. May play a role in maintaining ribosomal frameshifting in response to osmotic stress. Not required for global translation. This chain is 26S rRNA (cytosine-C(5))-methyltransferase nsun-5, found in Caenorhabditis elegans.